The sequence spans 444 residues: MGKGGNQGEGAAEREVPMPTFSWEEIQKHNLRTDRWLVIDRKVYNITKWSTQHPGGQRVIGHYAGEDATDAFRAFHPDLKFVGKFLKPLLIGELAPEEPSQDHGKNSKIIEDFRALKKTAEDMNLFKTNHVFFLLLLAHIIALESIAWFTVFYFGNGWIPTLITAFVLATSQAQAGWLQHDYGHLSVYRKPKWNHLVHKFVIGHLKGASANWWNHRHFQHHAKPNIFHKDPDVNMLHVFVLGEWQPIEYGKKKLKYLPYNHQHEYFFLIGPPLLIPMYFQYQIIMTMIVHKNWVDLAWAISYYIRFFVTYIPFYGILGALLFLNFIRFLESHWFVWVTQMNHIVMEIDQEAYRDWFSSQLTATCNVEQSFFNDWFSGHLNFQIEHHLFPTMPRHNLHKIAPLVKSLCAKHGIEYQEKPLLRALLDIIRSLRKSGKLWLDAYLHK.

At 1–131 the chain is on the cytoplasmic side; that stretch reads MGKGGNQGEG…DMNLFKTNHV (131 aa). Positions 18–95 constitute a Cytochrome b5 heme-binding domain; sequence MPTFSWEEIQ…LKPLLIGELA (78 aa). A helical membrane pass occupies residues 132 to 152; it reads FFLLLLAHIIALESIAWFTVF. The Lumenal segment spans residues 153-157; the sequence is YFGNG. Residues 158-178 traverse the membrane as a helical segment; it reads WIPTLITAFVLATSQAQAGWL. Residues 179–264 lie on the Cytoplasmic side of the membrane; sequence QHDYGHLSVY…KYLPYNHQHE (86 aa). The short motif at 180–184 is the Histidine box-1 element; that stretch reads HDYGH. Residues 217–221 carry the Histidine box-2 motif; the sequence is HFQHH. The chain crosses the membrane as a helical span at residues 265 to 285; that stretch reads YFFLIGPPLLIPMYFQYQIIM. Residues 286–305 are Lumenal-facing; it reads TMIVHKNWVDLAWAISYYIR. Residues 306–326 form a helical membrane-spanning segment; the sequence is FFVTYIPFYGILGALLFLNFI. The Cytoplasmic portion of the chain corresponds to 327 to 444; sequence RFLESHWFVW…KLWLDAYLHK (118 aa). A Histidine box-3 motif is present at residues 382-386; sequence QIEHH.

The protein belongs to the fatty acid desaturase type 1 family.

The protein localises to the endoplasmic reticulum membrane. The catalysed reaction is (9Z,12Z)-octadecadienoyl-CoA + 2 Fe(II)-[cytochrome b5] + O2 + 2 H(+) = (6Z,9Z,12Z)-octadecatrienoyl-CoA + 2 Fe(III)-[cytochrome b5] + 2 H2O. It carries out the reaction (9Z,12Z,15Z)-octadecatrienoyl-CoA + 2 Fe(II)-[cytochrome b5] + O2 + 2 H(+) = (6Z,9Z,12Z,15Z)-octadecatetraenoyl-CoA + 2 Fe(III)-[cytochrome b5] + 2 H2O. It catalyses the reaction (9Z,12Z,15Z,18Z,21Z)-tetracosapentaenoyl-CoA + 2 Fe(II)-[cytochrome b5] + O2 + 2 H(+) = (6Z,9Z,12Z,15Z,18Z,21Z)-tetracosahexaenoyl-CoA + 2 Fe(III)-[cytochrome b5] + 2 H2O. The enzyme catalyses (11E)-octadecenoyl-CoA + 2 Fe(II)-[cytochrome b5] + O2 + 2 H(+) = (6Z,11E)-octadecadienoyl-CoA + 2 Fe(III)-[cytochrome b5] + 2 H2O. The catalysed reaction is (11Z,14Z)-eicosadienoyl-CoA + 2 Fe(II)-[cytochrome b5] + O2 + 2 H(+) = (8Z,11Z,14Z)-eicosatrienoyl-CoA + 2 Fe(III)-[cytochrome b5] + 2 H2O. It carries out the reaction (11Z,14Z,17Z)-eicosatrienoyl-CoA + 2 Fe(II)-[cytochrome b5] + O2 + 2 H(+) = (8Z,11Z,14Z,17Z)-eicosatetraenoyl-CoA + 2 Fe(III)-[cytochrome b5] + 2 H2O. The protein operates within lipid metabolism; polyunsaturated fatty acid biosynthesis. In terms of biological role, involved in the biosynthesis of highly unsaturated fatty acids (HUFA) from the essential polyunsaturated fatty acids (PUFA) linoleic acid (LA) (18:2n-6) and alpha-linolenic acid (ALA) (18:3n-3) precursors, acting as a fatty acyl-coenzyme A (CoA) desaturase that introduces a cis double bond at carbon 6 of the fatty acyl chain. Catalyzes the first and rate limiting step in this pathway which is the desaturation of LA (18:2n-6) and ALA (18:3n-3) into gamma-linoleate (GLA) (18:3n-6) and stearidonate (18:4n-3), respectively. Subsequently, in the biosynthetic pathway of HUFA n-3 series, it desaturates tetracosapentaenoate (24:5n-3) to tetracosahexaenoate (24:6n-3), which is then converted to docosahexaenoate (DHA)(22:6n-3), an important lipid for nervous system function. It can also desaturate (11E)-octadecenoate (trans-vaccenoate) at carbon 6 generating (6Z,11E)-octadecadienoate. In addition to Delta-6 activity, this enzyme exhibits Delta-8 activity with slight biases toward n-3 fatty acyl-CoA substrates. This is Acyl-CoA 6-desaturase (FADS2) from Macaca fascicularis (Crab-eating macaque).